The following is a 61-amino-acid chain: Small ribosomal subunit protein uS14 (61 aa).

Residues C24, C27, C40, and C43 each coordinate Zn(2+).

It belongs to the universal ribosomal protein uS14 family. Zinc-binding uS14 subfamily. As to quaternary structure, part of the 30S ribosomal subunit. Contacts proteins S3 and S10. Zn(2+) serves as cofactor.

Functionally, binds 16S rRNA, required for the assembly of 30S particles and may also be responsible for determining the conformation of the 16S rRNA at the A site. This chain is Small ribosomal subunit protein uS14, found in Geobacillus thermodenitrificans (strain NG80-2).